We begin with the raw amino-acid sequence, 370 residues long: Polygalacturonase 1 (370 aa).

Residues Met1–Ala18 form the signal peptide. Cys36 and Cys51 are oxidised to a cystine. PbH1 repeat units follow at residues Ala163–Glu194, Ser195–Ser216, Gly217–Ser237, Val246–Thr267, and Val275–Gln297. Asp209 acts as the Proton donor in catalysis. A disulfide bridge links Cys211 with Cys227. Residue His231 is part of the active site. Asn248 carries an N-linked (GlcNAc...) asparagine glycan. Disulfide bonds link Cys337–Cys342 and Cys361–Cys370.

It belongs to the glycosyl hydrolase 28 family.

Its subcellular location is the secreted. It carries out the reaction (1,4-alpha-D-galacturonosyl)n+m + H2O = (1,4-alpha-D-galacturonosyl)n + (1,4-alpha-D-galacturonosyl)m.. This is Polygalacturonase 1 (PG1) from Penicillium olsonii.